The sequence spans 432 residues: Aspartate aminotransferase (432 aa).

Substrate is bound at residue 45–46 (RG). Position 109–111 (109–111 (SSL)) interacts with pyridoxal 5'-phosphate. 148–150 (YDR) provides a ligand contact to substrate. Pyridoxal 5'-phosphate is bound by residues Asn197, Tyr229, and 262-265 (STSK). Arg400 is a binding site for substrate.

Belongs to the class-I pyridoxal-phosphate-dependent aminotransferase family. Homodimer. It depends on pyridoxal 5'-phosphate as a cofactor.

It carries out the reaction L-aspartate + 2-oxoglutarate = oxaloacetate + L-glutamate. The sequence is that of Aspartate aminotransferase from Corynebacterium glutamicum (strain ATCC 13032 / DSM 20300 / JCM 1318 / BCRC 11384 / CCUG 27702 / LMG 3730 / NBRC 12168 / NCIMB 10025 / NRRL B-2784 / 534).